Consider the following 347-residue polypeptide: uncharacterized protein (347 aa).

Disordered regions lie at residues 1–40 (MAQE…SNSM), 72–92 (SCED…IQGS), 133–158 (SDST…QLTL), 173–209 (ENQK…QVSH), and 306–347 (EDPR…PPDF). Residues 15–25 (PGQNITETTTD) are compositionally biased toward polar residues. The segment covering 143–154 (GDNKDKHPKEKT) has biased composition (basic and acidic residues). The span at 179 to 194 (KDDDSVFPESAQEEDS) shows a compositional bias: acidic residues. Polar residues predominate over residues 195–209 (QLPSSSLPGMAQVSH). A compositionally biased stretch (basic and acidic residues) spans 306–318 (EDPREANERPREL). Over residues 319–330 (ARKKRFSYRSKR) the composition is skewed to basic residues.

This is an uncharacterized protein from Bos taurus (Bovine).